The following is a 246-amino-acid chain: Virulence plasmid protein pGP6-D (246 aa).

Belongs to the UPF0137 (pGP6-D) family.

The sequence is that of Virulence plasmid protein pGP6-D from Chlamydia psittaci (Chlamydophila psittaci).